The chain runs to 634 residues: Threonine--tRNA ligase (634 aa).

Residues 1 to 61 (MINIRFPDGS…NSNCELRLIT (61 aa)) enclose the TGS domain. Residues 241–532 (DHRKIGKVLD…LIEHYAGNLP (292 aa)) form a catalytic region. 3 residues coordinate Zn(2+): Cys-332, His-383, and His-509.

The protein belongs to the class-II aminoacyl-tRNA synthetase family. In terms of assembly, homodimer. Requires Zn(2+) as cofactor.

The protein resides in the cytoplasm. It carries out the reaction tRNA(Thr) + L-threonine + ATP = L-threonyl-tRNA(Thr) + AMP + diphosphate + H(+). Functionally, catalyzes the attachment of threonine to tRNA(Thr) in a two-step reaction: L-threonine is first activated by ATP to form Thr-AMP and then transferred to the acceptor end of tRNA(Thr). Also edits incorrectly charged L-seryl-tRNA(Thr). The sequence is that of Threonine--tRNA ligase from Francisella tularensis subsp. holarctica (strain FTNF002-00 / FTA).